A 96-amino-acid polypeptide reads, in one-letter code: HIG1 domain family member 1C (96 aa).

Over 1 to 26 the chain is Cytoplasmic; it reads MSSDEWSAAEDEGQLSRLLRKSRDSP. Residues 1–91 enclose the HIG1 domain; sequence MSSDEWSAAE…YKDYIRPRFF (91 aa). Residues 27-44 form a helical membrane-spanning segment; that stretch reads FVPVGMAGFVAVLSYGLY. The Extracellular segment spans residues 45 to 58; the sequence is KLNSRREQKMSLHL. The chain crosses the membrane as a helical span at residues 59–81; the sequence is IHVRVAAQGCVVGAVTLGVLYSM. Over 82–96 the chain is Cytoplasmic; sequence YKDYIRPRFFNVPKK.

Its subcellular location is the membrane. In Mus musculus (Mouse), this protein is HIG1 domain family member 1C (Higd1c).